A 160-amino-acid chain; its full sequence is Inner membrane protein YcdZ (160 aa).

Helical transmembrane passes span 20 to 42 (WGAV…YFAC), 50 to 70 (LLIS…IIHG), 72 to 92 (ALAP…AFLM), 99 to 119 (LLLS…AGQG), and 123 to 143 (LVLP…NSGL).

To E.coli YahC.

It localises to the cell inner membrane. In Salmonella typhimurium (strain LT2 / SGSC1412 / ATCC 700720), this protein is Inner membrane protein YcdZ (ycdZ).